We begin with the raw amino-acid sequence, 188 residues long: MYAELGEEDLEVLRDVTLSLLDSEKGVDPEVAKRTVDVILKREAIDEEIAEELGVDPREVRKVLYKLHERGVVTFRKERREEYRYPVYSWRLNLREVLRRCLEERRRELEEVERALSNDMSHPMFHCGNDDCPRMSFEEAMEHEFRCPKCGEVLEEVDLTEERRELERLAEELKVEIRRLEELRERLG.

The 90-residue stretch at 9–98 folds into the HTH TFE/IIEalpha-type domain; it reads DLEVLRDVTL…SWRLNLREVL (90 aa).

Belongs to the TFE family. In terms of assembly, monomer. Interaction with RNA polymerase subunits RpoF and RpoE is necessary for Tfe stimulatory transcription activity. Able to interact with Tbp and RNA polymerase in the absence of DNA promoter. Interacts both with the preinitiation and elongation complexes.

Functionally, transcription factor that plays a role in the activation of archaeal genes transcribed by RNA polymerase. Facilitates transcription initiation by enhancing TATA-box recognition by TATA-box-binding protein (Tbp), and transcription factor B (Tfb) and RNA polymerase recruitment. Not absolutely required for transcription in vitro, but particularly important in cases where Tbp or Tfb function is not optimal. It dynamically alters the nucleic acid-binding properties of RNA polymerases by stabilizing the initiation complex and destabilizing elongation complexes. Seems to translocate with the RNA polymerase following initiation and acts by binding to the non template strand of the transcription bubble in elongation complexes. This Methanopyrus kandleri (strain AV19 / DSM 6324 / JCM 9639 / NBRC 100938) protein is Transcription factor E.